The following is a 190-amino-acid chain: Potassium-transporting ATPase KdpC subunit (190 aa).

Residues 7 to 27 (PALLMLLVWTLITGVFYPVLV) traverse the membrane as a helical segment.

Belongs to the KdpC family. As to quaternary structure, the system is composed of three essential subunits: KdpA, KdpB and KdpC.

The protein localises to the cell inner membrane. Functionally, part of the high-affinity ATP-driven potassium transport (or Kdp) system, which catalyzes the hydrolysis of ATP coupled with the electrogenic transport of potassium into the cytoplasm. This subunit acts as a catalytic chaperone that increases the ATP-binding affinity of the ATP-hydrolyzing subunit KdpB by the formation of a transient KdpB/KdpC/ATP ternary complex. This is Potassium-transporting ATPase KdpC subunit from Methylococcus capsulatus (strain ATCC 33009 / NCIMB 11132 / Bath).